The chain runs to 434 residues: UPF0597 protein CLK_1462 (434 aa).

The protein belongs to the UPF0597 family.

The polypeptide is UPF0597 protein CLK_1462 (Clostridium botulinum (strain Loch Maree / Type A3)).